Consider the following 595-residue polypeptide: Inactive glycosyltransferase 25 family member 3 (595 aa).

An N-terminal signal peptide occupies residues 1-22 (MRAARAAPLLQLLLLLGPWLEA). Residues asparagine 75, asparagine 153, asparagine 237, and asparagine 360 are each glycosylated (N-linked (GlcNAc...) asparagine). Positions 548-595 (DTETSSPWDDDSGRLISWSGSQKTLRSPRLDLTGSSGHSLQPQPRDEL) are disordered. The segment covering 580–589 (TGSSGHSLQP) has biased composition (polar residues). A Prevents secretion from ER motif is present at residues 592-595 (RDEL).

The protein belongs to the glycosyltransferase 25 family. Ubiquitous. Highly expressed in secretory and nervous tissues.

Its subcellular location is the endoplasmic reticulum lumen. Functionally, probable cell adhesion protein involved in leukocyte transmigration across the blood-brain barrier. Does not express any beta-galactosyltransferase activity in vitro. The polypeptide is Inactive glycosyltransferase 25 family member 3 (CERCAM) (Homo sapiens (Human)).